A 275-amino-acid chain; its full sequence is Bis(5'-nucleosyl)-tetraphosphatase, symmetrical (275 aa).

This sequence belongs to the Ap4A hydrolase family.

The enzyme catalyses P(1),P(4)-bis(5'-adenosyl) tetraphosphate + H2O = 2 ADP + 2 H(+). Its function is as follows. Hydrolyzes diadenosine 5',5'''-P1,P4-tetraphosphate to yield ADP. The sequence is that of Bis(5'-nucleosyl)-tetraphosphatase, symmetrical from Haemophilus influenzae (strain PittEE).